Here is an 86-residue protein sequence, read N- to C-terminus: U18-theraphotoxin-Cg1a (86 aa).

The N-terminal stretch at 1-20 (KASVLITLAVLGVMFVWTSA) is a signal peptide. Positions 21–49 (AELEERGSDQRDSPALIKSMAKVFQSEER) are excised as a propeptide. Disulfide bonds link Cys51-Cys65, Cys58-Cys70, and Cys64-Cys78. Phe84 carries the post-translational modification Phenylalanine amide.

The protein belongs to the neurotoxin 10 (Hwtx-1) family. 47 subfamily. In terms of tissue distribution, expressed by the venom gland.

Its subcellular location is the secreted. Inhibits TTX-sensitive and TTX-insensitive sodium currents (IC(50) is 0.6 uM and 0.95 uM respectively) on rat dorsal root ganglion (DRG) neurons. Inhibits muscular subtypes sodium channels Nav1.4/SCN4A and Nav1.5/SCN5A transiently transfected in to HEK293 cells (IC(50) is 5.42 uM and 0.45 uM respectively). Also blocks Kv2.1/KCNB1 potassium channels expressed in X.laevis oocytes with an IC(50) of 604 nM. Injection of the toxin in mice was immediately followed by general ataxia, lack of response to stimuli and semiparalysis. This chain is U18-theraphotoxin-Cg1a, found in Chilobrachys guangxiensis (Chinese earth tiger tarantula).